Reading from the N-terminus, the 43-residue chain is KVFEILDMDRSFIEEELKLFALSSAETAAFLKIGVEEFQALVK.

2 consecutive EF-hand domains span residues 1-20 (KVFE…LKLF) and 22-43 (LSSA…ALVK). Residues Asp7, Asp9, Ser11, Phe12, Glu14, Glu16, and Glu37 each coordinate Ca(2+).

In terms of tissue distribution, detected in muscle and cutaneous mucus. In the skin, detected in cells in the basal region of the glandular epithelium of the dermal mucus glands (at protein level).

It is found in the cytoplasm. It localises to the secreted. Its function is as follows. In muscle, parvalbumin is thought to be involved in relaxation after contraction. It binds two calcium ions. The chain is Parvalbumin beta from Rana temporaria (European common frog).